A 124-amino-acid chain; its full sequence is Large ribosomal subunit protein bL21 (124 aa).

Belongs to the bacterial ribosomal protein bL21 family. Part of the 50S ribosomal subunit. Contacts protein L20.

Functionally, this protein binds to 23S rRNA in the presence of protein L20. This chain is Large ribosomal subunit protein bL21, found in Synechocystis sp. (strain ATCC 27184 / PCC 6803 / Kazusa).